The primary structure comprises 105 residues: UPF0473 protein SAG2089 (105 aa).

Belongs to the UPF0473 family.

In Streptococcus agalactiae serotype V (strain ATCC BAA-611 / 2603 V/R), this protein is UPF0473 protein SAG2089.